The chain runs to 215 residues: Cytochrome b6 (215 aa).

The chain crosses the membrane as a helical span at residues 32–52; sequence IFYCLGGITLTCFLVQVATGF. Cys35 lines the heme c pocket. 2 residues coordinate heme b: His86 and His100. 3 consecutive transmembrane segments (helical) span residues 90 to 110, 116 to 136, and 186 to 206; these read ASMM…TGGF, LTWV…VTGY, and LHTF…FPMI. His187 and His202 together coordinate heme b.

It belongs to the cytochrome b family. PetB subfamily. As to quaternary structure, the 4 large subunits of the cytochrome b6-f complex are cytochrome b6, subunit IV (17 kDa polypeptide, PetD), cytochrome f and the Rieske protein, while the 4 small subunits are PetG, PetL, PetM and PetN. The complex functions as a dimer. Requires heme b as cofactor. It depends on heme c as a cofactor.

It is found in the plastid. It localises to the chloroplast thylakoid membrane. Its function is as follows. Component of the cytochrome b6-f complex, which mediates electron transfer between photosystem II (PSII) and photosystem I (PSI), cyclic electron flow around PSI, and state transitions. The polypeptide is Cytochrome b6 (Phalaenopsis aphrodite subsp. formosana (Moth orchid)).